Reading from the N-terminus, the 145-residue chain is MESIWRIATGQDPSREDYEGIEFWSNPERSGWLTKQGDYIKTWRRRWFVLKRGKLLWFKDQAAAGIRGSTPRGVISVGDCLTVKGAEDVVNKPFAFELSSGSYTMFFIADNEKEKEEWINSIGRSIVQHSRSVTDSEVLDYDHRR.

In terms of domain architecture, PH spans 26-127 (NPERSGWLTK…WINSIGRSIV (102 aa)). The interval 29 to 53 (RSGWLTKQGDYIKTWRRRWFVLKRG) is binds specifically PtdIns3P.

As to quaternary structure, binds PtdIns3P. In terms of tissue distribution, ubiquitously expressed.

The protein resides in the cytoplasm. Functionally, binds specifically to phosphatidylinositol 3-phosphate (PtdIns3P), but not to other phosphoinositides. This is Pleckstrin homology domain-containing protein 1 (PH1) from Arabidopsis thaliana (Mouse-ear cress).